Here is a 360-residue protein sequence, read N- to C-terminus: Putative F-box protein At1g65770 (360 aa).

The F-box domain occupies 2–50 (ADWSTLPVDLLNMIAGRLFSNIELKRFRSICRSWRSSVPGAGKKNPFRT).

In Arabidopsis thaliana (Mouse-ear cress), this protein is Putative F-box protein At1g65770.